A 950-amino-acid polypeptide reads, in one-letter code: Protein translocase subunit SecA 1 (950 aa).

Residues Gln-83, 101 to 105 (GEGKT), and Asp-490 each bind ATP. Residues 864-950 (EGGAGRKNAA…AKPPKSVKKR (87 aa)) are disordered. Residues 873–888 (AAREEAPSRLRAKGIE) show a composition bias toward basic and acidic residues.

Belongs to the SecA family. In terms of assembly, monomer and homodimer. Part of the essential Sec protein translocation apparatus which comprises SecA, SecYEG and auxiliary proteins SecDF. Other proteins may also be involved.

It is found in the cell membrane. The protein resides in the cytoplasm. It catalyses the reaction ATP + H2O + cellular proteinSide 1 = ADP + phosphate + cellular proteinSide 2.. Functionally, part of the Sec protein translocase complex. Interacts with the SecYEG preprotein conducting channel. Has a central role in coupling the hydrolysis of ATP to the transfer of proteins into and across the cell membrane, serving as an ATP-driven molecular motor driving the stepwise translocation of polypeptide chains across the membrane. This chain is Protein translocase subunit SecA 1, found in Mycobacterium ulcerans (strain Agy99).